The sequence spans 448 residues: Exoglucanase GH7B (448 aa).

Positions 1 to 17 (MSLAVVFLLGFLAVSHG) are cleaved as a signal peptide. The residue at position 18 (glutamine 18) is a Pyrrolidone carboxylic acid. 2 cysteine pairs are disulfide-bonded: cysteine 62-cysteine 83 and cysteine 73-cysteine 79. Substrate is bound by residues tyrosine 97, 119 to 120 (DI), and lysine 197. 6 cysteine pairs are disulfide-bonded: cysteine 154–cysteine 415, cysteine 188–cysteine 226, cysteine 192–cysteine 225, cysteine 246–cysteine 271, cysteine 254–cysteine 259, and cysteine 276–cysteine 350. The Nucleophile role is filled by glutamate 228. Substrate is bound by residues 230–233 (DIWE) and histidine 244. Catalysis depends on glutamate 233, which acts as the Proton donor/acceptor. 2 residues coordinate substrate: arginine 266 and aspartate 274. Residues tryptophan 396 and arginine 412 each coordinate substrate.

The protein belongs to the glycosyl hydrolase 7 (cellulase C) family. As to quaternary structure, monomer. As to expression, highly expressed in the hepatopancreas (at protein level). Little or no expression detected in the hindgut or the rest of the body (at protein level).

It is found in the secreted. The catalysed reaction is Hydrolysis of (1-&gt;4)-beta-D-glucosidic linkages in cellulose and cellotetraose, releasing cellobiose from the non-reducing ends of the chains.. In terms of biological role, exocellobiohydrolase (CBH) that catalyzes the hydrolysis of 1,4-beta-D-glucosidic bonds in cellulose to release the disaccharide cellobiose. The degradation of cellulose involves an interplay between different cellulolytic enzymes. Hydrolysis starts with endoglucanases (EGs), which cut internal beta-1,4-glucosidic bonds in cellulose to reduce the polymerization degree of the substrate and create new chain ends for exocellobiohydrolases (CBHs). The CBHs release the disaccharide cellobiose from the non-reducing end of the cellulose polymer chain. Finally, beta-1,4-glucosidases hydrolyze the cellobiose and other short cello-oligosaccharides into glucose units. The polypeptide is Exoglucanase GH7B (Limnoria quadripunctata (Gribble)).